The primary structure comprises 67 residues: DNA-directed RNA polymerases I, II, and III subunit RPABC5 (67 aa).

Zn(2+) contacts are provided by Cys-7, Cys-10, Cys-44, and Cys-45.

It belongs to the archaeal Rpo10/eukaryotic RPB10 RNA polymerase subunit family. In terms of assembly, component of the RNA polymerase I (Pol I), RNA polymerase II (Pol II) and RNA polymerase III (Pol III) complexes consisting of at least 13, 12 and 17 subunits, respectively.

The protein localises to the nucleus. Functionally, DNA-dependent RNA polymerase catalyzes the transcription of DNA into RNA using the four ribonucleoside triphosphates as substrates. Common component of RNA polymerases I, II and III which synthesize ribosomal RNA precursors, mRNA precursors and many functional non-coding RNAs, and a small RNAs, such as 5S rRNA and tRNAs, respectively. Pol II is the central component of the basal RNA polymerase II transcription machinery. Pols are composed of mobile elements that move relative to each other. In Pol II, Polr2L is part of the core element with the central large cleft. The polypeptide is DNA-directed RNA polymerases I, II, and III subunit RPABC5 (Drosophila melanogaster (Fruit fly)).